The primary structure comprises 225 residues: Reticulon-like protein B9 (225 aa).

One can recognise a Reticulon domain in the interval 39-224 (VADILLWREP…PRGTVKNKKF (186 aa)). Helical transmembrane passes span 50-70 (IAATLVIGVSILWFLMEVVEY), 72-92 (FITLICHASMTSMLFFFIWST), and 152-172 (YIVSIIGTYFNFVNLLFIGFV).

The protein localises to the endoplasmic reticulum membrane. The polypeptide is Reticulon-like protein B9 (RTNLB9) (Arabidopsis thaliana (Mouse-ear cress)).